We begin with the raw amino-acid sequence, 160 residues long: Transcriptional repressor NrdR (160 aa).

The segment covering 1–11 (MRCPSCSSLDT) has biased composition (polar residues). A disordered region spans residues 1–20 (MRCPSCSSLDTQVKDSRPTE). Residues 3 to 34 (CPSCSSLDTQVKDSRPTEDSSVIRRRRVCLAC) fold into a zinc finger. The ATP-cone domain maps to 49–139 (LTVIKRNGRR…VYRNFREAKD (91 aa)).

It belongs to the NrdR family. Requires Zn(2+) as cofactor.

Functionally, negatively regulates transcription of bacterial ribonucleotide reductase nrd genes and operons by binding to NrdR-boxes. This Rhodopseudomonas palustris (strain BisA53) protein is Transcriptional repressor NrdR.